The sequence spans 1620 residues: ABC-type organic anion transporter ABCA8B (1620 aa).

Transmembrane regions (helical) follow at residues 30-50, 223-243, 267-287, 298-318, 326-346, 352-372, and 396-416; these read SLME…YPHG, FFIF…SINV, SWGL…ALVI, FMVV…LAFL, SVLT…LGFT, LPAP…TLGM, and LIIA…ALMM. The region spanning 479–714 is the ABC transporter 1 domain; the sequence is IRIRNISKEY…WGVGYHLSLQ (236 aa). 515–522 contributes to the ATP binding site; it reads GHSGAGKS. A glycan (N-linked (GlcNAc...) asparagine) is linked at Asn-723. The next 8 membrane-spanning stretches (helical) occupy residues 860 to 880, 979 to 999, 1023 to 1043, 1069 to 1089, 1105 to 1125, 1135 to 1155, 1164 to 1184, and 1194 to 1214; these read TLLS…FENI, CFPV…KPSA, TAFW…SSVT, MVDI…DYLF, IPCS…ISFI, IWSL…LLAF, IIFL…LHLF, and VIEP…FIFT. The region spanning 1283-1516 is the ABC transporter 2 domain; it reads LRKEYAGKQK…FGKDYLLEMK (234 aa). 1321–1328 contributes to the ATP binding site; it reads GHNGAGKS.

It belongs to the ABC transporter superfamily. ABCA family. In terms of tissue distribution, expressed in heart, brain, lung, liver and skeletal muscle. Highly expressed in the liver, and is also abundant in heart and skeletal muscle. Highly expressed in liver.

The protein resides in the cell membrane. The protein localises to the basolateral cell membrane. It catalyses the reaction taurocholate(in) + ATP + H2O = taurocholate(out) + ADP + phosphate + H(+). The catalysed reaction is cholesterol(in) + ATP + H2O = cholesterol(out) + ADP + phosphate + H(+). With respect to regulation, cholesterol efflux is increased by extracellularly applied taurocholate. Mediates cholesterol and taurocholate efflux. Through the interaction with ABCA1 potentiates the cholesterol efflux to lipid-free APOA1, in turn regulates high-density lipoprotein cholesterol levels. This Mus musculus (Mouse) protein is ABC-type organic anion transporter ABCA8B.